The sequence spans 436 residues: Trigger factor (436 aa).

A PPIase FKBP-type domain is found at 161-246 (GDQLNIDFVG…VNSVSAPQLP (86 aa)).

The protein belongs to the FKBP-type PPIase family. Tig subfamily.

The protein resides in the cytoplasm. It catalyses the reaction [protein]-peptidylproline (omega=180) = [protein]-peptidylproline (omega=0). Its function is as follows. Involved in protein export. Acts as a chaperone by maintaining the newly synthesized protein in an open conformation. Functions as a peptidyl-prolyl cis-trans isomerase. The chain is Trigger factor from Ectopseudomonas mendocina (strain ymp) (Pseudomonas mendocina).